Here is an 880-residue protein sequence, read N- to C-terminus: Beta-N-acetylglucosaminidase (880 aa).

Positions 1 to 27 are cleaved as a signal peptide; it reads MKKRLIAPMLLSAASLAFFAMSGSAQA. 3 consecutive SPOR domains span residues 70–149, 150–229, and 230–311; these read SGTT…VKAY, GAAQ…LKET, and VKGQ…YQQV. 2 consecutive repeat copies span residues 439-473 and 479-513. The region spanning 630-700 is the SH3b domain; that stretch reads TATSTVTADV…VDPNNFSRDS (71 aa).

The protein belongs to the glycosyl hydrolase 73 family. In terms of assembly, homodimer.

It localises to the secreted. The protein resides in the cell wall. The enzyme catalyses an N(4)-(oligosaccharide-(1-&gt;3)-[oligosaccharide-(1-&gt;6)]-beta-D-Man-(1-&gt;4)-beta-D-GlcNAc-(1-&gt;4)-alpha-D-GlcNAc)-L-asparaginyl-[protein] + H2O = an oligosaccharide-(1-&gt;3)-[oligosaccharide-(1-&gt;6)]-beta-D-Man-(1-&gt;4)-D-GlcNAc + N(4)-(N-acetyl-beta-D-glucosaminyl)-L-asparaginyl-[protein]. With respect to regulation, inhibited by diethyl pyrocarbonate, slightly by EDTA. Not inhibited by PMSF, diisopropyl fluorophosphate, 2-mercaptoethanol or N-ethylmaleimide. Its function is as follows. Cell wall hydrolase not involved in cell autolysis, competence, sporulation or germination. It hydrolyzes the beta-1,4 glycan bond between the N-acetylglucosaminyl and the N-acetylmuramoyl residues in the glycan chain. The protein is Beta-N-acetylglucosaminidase (lytD) of Bacillus subtilis (strain 168).